The following is a 372-amino-acid chain: F-box protein AFR (372 aa).

Residues 1–15 show a composition bias toward polar residues; that stretch reads MAEQETTSNINTIND. The tract at residues 1–27 is disordered; it reads MAEQETTSNINTINDQAEEETRTKSQP. One can recognise an F-box domain in the interval 29–74; it reads ISGLPNDIAELCLLRLPYPYHALYRSVSSSWNKTITNPRFLFSKQS. Kelch repeat units follow at residues 80–126, 135–178, 179–227, 229–276, and 279–325; these read PYLF…HALS, KLFV…NVNG, KIMA…VIGK, MCVT…IRDR, and VISE…DRVF.

As to quaternary structure, part of a SCF (ASK-cullin-F-box) protein ligase complex. Interacts with SKP1A.

The protein operates within protein modification; protein ubiquitination. Functionally, component of SCF (ASK-cullin-F-box) E3 ubiquitin ligase complexes, which may mediate the ubiquitination and subsequent proteasomal degradation of target proteins. Part of the phyA-mediated signaling transduction pathway leading to the regulation of gene expression and hypocotyls elongation in response to red and far-red light exposure. The polypeptide is F-box protein AFR (AFR) (Arabidopsis thaliana (Mouse-ear cress)).